Here is a 2540-residue protein sequence, read N- to C-terminus: Probable JmjC domain-containing histone demethylation protein 2C (2540 aa).

Over residues 278–309 (TRAQANSPRPAMNSQAAVPKQNTHQQQQQRSI) the composition is skewed to polar residues. Residues 278–478 (TRAQANSPRP…TVSDHNSNDL (201 aa)) form a disordered region. S317 and S320 each carry phosphoserine. The span at 323–342 (DEEKMKEEKYDYISRGENPK) shows a compositional bias: basic and acidic residues. Residues 343–353 (GKNKHLMNKRR) show a composition bias toward basic residues. Positions 354-371 (KPEEDEKKLNMKRLRTDN) are enriched in basic and acidic residues. Residues S373 and S376 each carry the phosphoserine modification. Residues 373–382 (SDFSESSDSE) are compositionally biased toward low complexity. Basic and acidic residues-rich tracts occupy residues 383–403 (NSNKRIIDNSSEQKPENELKN), 410–427 (NGEEGKPHNNEKAGEETL), and 438–452 (QEDKKHEEAEKRKSV). The span at 464-478 (SSEQSTVSDHNSNDL) shows a compositional bias: polar residues. A phosphoserine mark is found at S475 and S501. T505 carries the post-translational modification Phosphothreonine. S601, S617, S638, S639, S641, S652, and S943 each carry phosphoserine. A disordered region spans residues 631 to 656 (VDTHKIKSSPSPEVVKPKITHSPDSV). 2 disordered regions span residues 1242-1263 (GKVQESQKPPTLIPEPKDSQAN) and 1614-1692 (NRRK…NSNT). Residues 1643–1652 (KRQPKPTYKK) show a composition bias toward basic residues. Residues 1653-1669 (KQNDLQKRKGEIEEDLK) show a composition bias toward basic and acidic residues. A C6-type zinc finger spans residues 1846–1871 (CDACEATLFNIHWVCQKCGFVVCLDC). A compositionally biased stretch (polar residues) spans 1971-1991 (PESQQQNTPPKSEKNGGSSPE). Residues 1971–2064 (PESQQQNTPP…LVSQNNEQGS (94 aa)) are disordered. Residue S1989 is modified to Phosphoserine. Residues 2016–2043 (AEQKAREEKKENKELTLENQIKEEREQD) show a composition bias toward basic and acidic residues. Residues 2045–2064 (SESPNGRTSPLVSQNNEQGS) are compositionally biased toward polar residues. The LXXLL motif signature appears at 2066 to 2070 (LRDLL). Residues K2132 and K2136 each participate in a glycyl lysine isopeptide (Lys-Gly) (interchain with G-Cter in SUMO2) cross-link. In terms of domain architecture, JmjC spans 2274 to 2498 (MPARYEDLLK…ESFHLTQELR (225 aa)). 3 residues coordinate Fe cation: H2336, E2338, and H2466.

This sequence belongs to the JHDM2 histone demethylase family. In terms of assembly, interacts specifically with the ligand-binding domain of the thyroid receptor (TR). Requires the presence of thyroid hormone for its interaction. It depends on Fe(2+) as a cofactor.

The protein resides in the nucleus. Its function is as follows. Probable histone demethylase that specifically demethylates 'Lys-9' of histone H3, thereby playing a central role in histone code. Demethylation of Lys residue generates formaldehyde and succinate. May be involved in hormone-dependent transcriptional activation, by participating in recruitment to androgen-receptor target genes. In Homo sapiens (Human), this protein is Probable JmjC domain-containing histone demethylation protein 2C (JMJD1C).